Reading from the N-terminus, the 198-residue chain is Small ribosomal subunit protein uS7 (198 aa).

Belongs to the universal ribosomal protein uS7 family. Part of the 30S ribosomal subunit.

Functionally, one of the primary rRNA binding proteins, it binds directly to 16S rRNA where it nucleates assembly of the head domain of the 30S subunit. Is located at the subunit interface close to the decoding center. This Desulfurococcus mucosus (Desulfurococcus mobilis) protein is Small ribosomal subunit protein uS7.